We begin with the raw amino-acid sequence, 299 residues long: Acetaldehyde dehydrogenase 1 (299 aa).

C130 (acyl-thioester intermediate) is an active-site residue. Residues 161–169 (SVGPGTRKN) and N272 each bind NAD(+).

It belongs to the acetaldehyde dehydrogenase family.

It carries out the reaction acetaldehyde + NAD(+) + CoA = acetyl-CoA + NADH + H(+). The protein is Acetaldehyde dehydrogenase 1 (mhpF) of Burkholderia cenocepacia (strain ATCC BAA-245 / DSM 16553 / LMG 16656 / NCTC 13227 / J2315 / CF5610) (Burkholderia cepacia (strain J2315)).